A 248-amino-acid chain; its full sequence is Ribosomal RNA small subunit methyltransferase J (248 aa).

S-adenosyl-L-methionine-binding positions include 98–99 (RD), 114–115 (ER), 150–151 (SS), and Asp-168.

Belongs to the methyltransferase superfamily. RsmJ family.

It localises to the cytoplasm. It carries out the reaction guanosine(1516) in 16S rRNA + S-adenosyl-L-methionine = N(2)-methylguanosine(1516) in 16S rRNA + S-adenosyl-L-homocysteine + H(+). Specifically methylates the guanosine in position 1516 of 16S rRNA. In Shewanella baltica (strain OS195), this protein is Ribosomal RNA small subunit methyltransferase J.